Here is a 140-residue protein sequence, read N- to C-terminus: ATP synthase epsilon chain (140 aa).

It belongs to the ATPase epsilon chain family. In terms of assembly, F-type ATPases have 2 components, CF(1) - the catalytic core - and CF(0) - the membrane proton channel. CF(1) has five subunits: alpha(3), beta(3), gamma(1), delta(1), epsilon(1). CF(0) has three main subunits: a, b and c.

Its subcellular location is the cell inner membrane. Functionally, produces ATP from ADP in the presence of a proton gradient across the membrane. The protein is ATP synthase epsilon chain of Nitrosococcus oceani (strain ATCC 19707 / BCRC 17464 / JCM 30415 / NCIMB 11848 / C-107).